We begin with the raw amino-acid sequence, 171 residues long: Nicotinamide-nucleotide adenylyltransferase (171 aa).

Belongs to the archaeal NMN adenylyltransferase family.

Its subcellular location is the cytoplasm. The catalysed reaction is beta-nicotinamide D-ribonucleotide + ATP + H(+) = diphosphate + NAD(+). Its pathway is cofactor biosynthesis; NAD(+) biosynthesis; NAD(+) from nicotinamide D-ribonucleotide: step 1/1. The protein is Nicotinamide-nucleotide adenylyltransferase of Ignicoccus hospitalis (strain KIN4/I / DSM 18386 / JCM 14125).